The sequence spans 527 residues: Probable serine/threonine-protein kinase DDB_G0271538 (527 aa).

Residues 1–10 (MNINFSKDDI) are compositionally biased toward basic and acidic residues. The segment at 1-24 (MNINFSKDDITGLPKSTKEEDEND) is disordered. Residues 33–294 (LFMDVEIGRG…KIVVEGLKVL (262 aa)) enclose the Protein kinase domain. ATP-binding positions include 39-47 (IGRGSFGQV) and K60. The Proton acceptor role is filled by D156. Disordered stretches follow at residues 304–375 (VKGK…ISGS), 422–452 (FTPP…DDVP), and 485–527 (TALD…KKKL). A compositionally biased stretch (acidic residues) spans 313 to 324 (DPDEDSFIDPND). Residues 325-359 (DSNNNNNSENNNNNNDNSNENNENNNENNNNSNEN) are compositionally biased toward low complexity. Residues 440 to 452 (VDEDEDEDEDDVP) show a composition bias toward acidic residues. Over residues 512 to 527 (PKKKPNNKNKKKKKKL) the composition is skewed to basic residues.

This sequence belongs to the protein kinase superfamily. TKL Ser/Thr protein kinase family.

It carries out the reaction L-seryl-[protein] + ATP = O-phospho-L-seryl-[protein] + ADP + H(+). The catalysed reaction is L-threonyl-[protein] + ATP = O-phospho-L-threonyl-[protein] + ADP + H(+). The protein is Probable serine/threonine-protein kinase DDB_G0271538 of Dictyostelium discoideum (Social amoeba).